The sequence spans 233 residues: uncharacterized protein (233 aa).

This is an uncharacterized protein from Acanthamoeba polyphaga (Amoeba).